The sequence spans 60 residues: Cytochrome c oxidase subunit 7, mitochondrial (60 aa).

The Mitochondrial matrix segment spans residues 2-29 (ANKVIQLQKIFQSSTKPLWWRHPRSALY). A helical transmembrane segment spans residues 30–53 (LYPFYAIFAVAVVTPLLYIPNAIR). Residues 54–60 (GIKAKKA) are Mitochondrial intermembrane-facing.

The protein belongs to the cytochrome c oxidase VIIa family. In terms of assembly, component of the cytochrome c oxidase (complex IV, CIV), a multisubunit enzyme composed of 12 subunits. The complex is composed of a catalytic core of 3 subunits COX1, COX2 and COX3, encoded in the mitochondrial DNA, and 9 supernumerary subunits COX4, COX5A (or COX5B), COX6, COX7, COX8, COX9, COX12, COX13 and COX26, which are encoded in the nuclear genome. The complex exists as a monomer or a dimer and forms supercomplexes (SCs) in the inner mitochondrial membrane with a dimer of ubiquinol-cytochrome c oxidoreductase (cytochrome b-c1 complex, complex III, CIII), resulting in 2 different assemblies (supercomplexes III(2)IV and III(2)IV(2)).

The protein resides in the mitochondrion inner membrane. The protein operates within energy metabolism; oxidative phosphorylation. Functionally, component of the cytochrome c oxidase, the last enzyme in the mitochondrial electron transport chain which drives oxidative phosphorylation. The respiratory chain contains 3 multisubunit complexes succinate dehydrogenase (complex II, CII), ubiquinol-cytochrome c oxidoreductase (cytochrome b-c1 complex, complex III, CIII) and cytochrome c oxidase (complex IV, CIV), that cooperate to transfer electrons derived from NADH and succinate to molecular oxygen, creating an electrochemical gradient over the inner membrane that drives transmembrane transport and the ATP synthase. Cytochrome c oxidase is the component of the respiratory chain that catalyzes the reduction of oxygen to water. Electrons originating from reduced cytochrome c in the intermembrane space (IMS) are transferred via the dinuclear copper A center (CU(A)) of COX2 and heme A of COX1 to the active site in COX1, a binuclear center (BNC) formed by heme A3 and copper B (CU(B)). The BNC reduces molecular oxygen to 2 water molecules using 4 electrons from cytochrome c in the IMS and 4 protons from the mitochondrial matrix. This is Cytochrome c oxidase subunit 7, mitochondrial (COX7) from Saccharomyces cerevisiae (strain ATCC 204508 / S288c) (Baker's yeast).